The chain runs to 397 residues: Sporulation-specific protein 20 (397 aa).

The segment at 1 to 26 (MGFRKILASKSHHSRHHNQHHKNLKL) is disordered. Residues 4-50 (RKILASKSHHSRHHNQHHKNLKLQNHRYVLISNITGSHETKYLSPFR) form an inhibitory region region. The segment covering 10 to 26 (KSHHSRHHNQHHKNLKL) has biased composition (basic residues). Residues 51 to 95 (MDNCSGSRRRDRLHVKLKSLRNKIHKQLHPNCRFDDATKTSDDKC) form a positive regulatory region region. The t-SNARE coiled-coil homology domain maps to 330–392 (NQMEIDLYGN…QAKRYRLEKV (63 aa)).

Belongs to the SNAP-25 family. As to quaternary structure, interacts with the t-SNARE SSO1 and the v-SNARE SNC2.

It is found in the cell membrane. The protein resides in the prospore membrane. In terms of biological role, required to maintain the prospore membrane to the nucleus during sporulation in order to capture the daughter nuclei and form the spores. Mediates the fusion of exocytic vesicles with the plasma membrane during sporulation through its interactions with the t-SNARE SSO1 and v-SNARE SNC2. The polypeptide is Sporulation-specific protein 20 (SPO20) (Saccharomyces cerevisiae (strain ATCC 204508 / S288c) (Baker's yeast)).